Here is a 172-residue protein sequence, read N- to C-terminus: Methylated-DNA--protein-cysteine methyltransferase (172 aa).

Catalysis depends on C142, which acts as the Nucleophile; methyl group acceptor.

This sequence belongs to the MGMT family.

It is found in the cytoplasm. It carries out the reaction a 6-O-methyl-2'-deoxyguanosine in DNA + L-cysteinyl-[protein] = S-methyl-L-cysteinyl-[protein] + a 2'-deoxyguanosine in DNA. It catalyses the reaction a 4-O-methyl-thymidine in DNA + L-cysteinyl-[protein] = a thymidine in DNA + S-methyl-L-cysteinyl-[protein]. Its function is as follows. Involved in the cellular defense against the biological effects of O6-methylguanine (O6-MeG) and O4-methylthymine (O4-MeT) in DNA. Repairs the methylated nucleobase in DNA by stoichiometrically transferring the methyl group to a cysteine residue in the enzyme. This is a suicide reaction: the enzyme is irreversibly inactivated. The polypeptide is Methylated-DNA--protein-cysteine methyltransferase (Pyrococcus horikoshii (strain ATCC 700860 / DSM 12428 / JCM 9974 / NBRC 100139 / OT-3)).